A 629-amino-acid chain; its full sequence is Serine/threonine-protein kinase ICK (629 aa).

The Protein kinase domain maps to tyrosine 4–phenylalanine 284. ATP is bound by residues leucine 10 to valine 18 and lysine 33. The active-site Proton acceptor is aspartate 125. Threonine 157 bears the Phosphothreonine mark. Phosphotyrosine is present on tyrosine 159. Serine 161 is modified (phosphoserine). 3 disordered regions span residues isoleucine 292 to alanine 322, proline 454 to alanine 482, and glycine 579 to arginine 629. The span at glycine 309–glutamine 321 shows a compositional bias: pro residues. Over residues threonine 460–alanine 482 the composition is skewed to polar residues.

Belongs to the protein kinase superfamily. CMGC Ser/Thr protein kinase family. CDC2/CDKX subfamily. Mg(2+) is required as a cofactor. Post-translationally, autophosphorylated on serine and threonine residues. Phosphorylation at Thr-157 increases kinase activity. As to expression, expressed in embryonic heart from day 11. Highly expressed in the uterus and at lower levels in brain, heart, lung, kidney, skeletal muscle, ovary and liver in adult tissues.

It localises to the cytoplasm. The protein localises to the cell projection. Its subcellular location is the cilium. The protein resides in the nucleus. It is found in the cytoskeleton. It localises to the cilium basal body. It carries out the reaction L-seryl-[protein] + ATP = O-phospho-L-seryl-[protein] + ADP + H(+). It catalyses the reaction L-threonyl-[protein] + ATP = O-phospho-L-threonyl-[protein] + ADP + H(+). Functionally, required for ciliogenesis, particularly in neuronal and retinal progenitor cells. Phosphorylates KIF3A. Involved in the control of ciliary length. Regulates the ciliary localization of SHH pathway components as well as the localization of IFT components at ciliary tips. May play a role in cardiac development. Regulates intraflagellar transport (IFT) speed and negatively regulates cilium length in a cAMP and mTORC1 signaling-dependent manner and this regulation requires its kinase activity. This is Serine/threonine-protein kinase ICK (Cilk1) from Rattus norvegicus (Rat).